Here is a 207-residue protein sequence, read N- to C-terminus: MSERDDRAAFLAANDVSRETLDRLDRVIDTLDVWRQKSNLIGPKEWPQIWTRHVGDSWQLLDHIPETAHLVDLGSGAGFPGLIIAAARSLGHVTMIESVGKKCAFLRAAIQEADLSAAVHQGRVEAAPPIKAEFVTARAFAPLPELLDYAAPWLRKGAVGVFPKGERWNEELTAARQRWNFAYEAIPSRSGGSGVILIIREVARRND.

S-adenosyl-L-methionine is bound by residues Gly74, Phe79, 124–125 (VE), and Arg138.

The protein belongs to the methyltransferase superfamily. RNA methyltransferase RsmG family.

The protein localises to the cytoplasm. The enzyme catalyses guanosine(527) in 16S rRNA + S-adenosyl-L-methionine = N(7)-methylguanosine(527) in 16S rRNA + S-adenosyl-L-homocysteine. Its function is as follows. Specifically methylates the N7 position of guanine in position 527 of 16S rRNA. The protein is Ribosomal RNA small subunit methyltransferase G of Hyphomonas neptunium (strain ATCC 15444).